A 206-amino-acid polypeptide reads, in one-letter code: Ribosomal RNA large subunit methyltransferase E (206 aa).

5 residues coordinate S-adenosyl-L-methionine: glycine 60, tryptophan 62, aspartate 80, aspartate 96, and aspartate 121. The active-site Proton acceptor is lysine 161.

Belongs to the class I-like SAM-binding methyltransferase superfamily. RNA methyltransferase RlmE family.

The protein localises to the cytoplasm. The catalysed reaction is uridine(2552) in 23S rRNA + S-adenosyl-L-methionine = 2'-O-methyluridine(2552) in 23S rRNA + S-adenosyl-L-homocysteine + H(+). In terms of biological role, specifically methylates the uridine in position 2552 of 23S rRNA at the 2'-O position of the ribose in the fully assembled 50S ribosomal subunit. This chain is Ribosomal RNA large subunit methyltransferase E, found in Francisella tularensis subsp. tularensis (strain FSC 198).